The primary structure comprises 513 residues: MSIIEHLEQLLEYGLERKLISIWDREYTRNRLYEALGITHPEPNSSTSIKQSQSLPDLLAPIYKWAAETGRMEADTDTYRDLLSAKLMGCFVPAPSEVIRKFEETKALYGPKQATKEFYQYSEDVYYIRTDRIAKNVHWTVPTEYGELEMTINLSKPEKDPKAIAAAKEQEQTNYPMCLLCKENVGFEGSVNHPARQNHRIIPVILEDEQWFLQFSPYVYYPEHCIVLKGEHEPMEISKKTFERLLSFLGQYPHYFIGSNADLPIVGGSILSHDHFQGGAHDFPMARAEAEDVYELNDYPGVSLGLVKWPMSVLRLQGDEPGHVAEAADHIFRTWQTYSDEKAGIAAYTGDTPHNTVTPIARRRGDLYELDIVLRNNRTDEEHPLGIFHPHQEVHHIKKENIGLIEVMGLAILPGRLQEEMKETAAALCSADPKTALEQNPLTAKHSEWALRTMEKRTITKENVDLVIKEELGHVFARILEHAGVFKQTAEGKQAFRRFIDQLGAKPVKSLNR.

Belongs to the galactose-1-phosphate uridylyltransferase type 2 family.

Its subcellular location is the cytoplasm. It carries out the reaction alpha-D-galactose 1-phosphate + UDP-alpha-D-glucose = alpha-D-glucose 1-phosphate + UDP-alpha-D-galactose. It participates in carbohydrate metabolism; galactose metabolism. This chain is Galactose-1-phosphate uridylyltransferase (galT), found in Bacillus subtilis (strain 168).